The sequence spans 345 residues: Phosphoribosylformylglycinamidine cyclo-ligase (345 aa).

This sequence belongs to the AIR synthase family.

It is found in the cytoplasm. It carries out the reaction 2-formamido-N(1)-(5-O-phospho-beta-D-ribosyl)acetamidine + ATP = 5-amino-1-(5-phospho-beta-D-ribosyl)imidazole + ADP + phosphate + H(+). It participates in purine metabolism; IMP biosynthesis via de novo pathway; 5-amino-1-(5-phospho-D-ribosyl)imidazole from N(2)-formyl-N(1)-(5-phospho-D-ribosyl)glycinamide: step 2/2. The chain is Phosphoribosylformylglycinamidine cyclo-ligase from Bifidobacterium longum (strain DJO10A).